The chain runs to 204 residues: UPF0228 protein MA_0511 (204 aa).

It belongs to the UPF0228 family.

The sequence is that of UPF0228 protein MA_0511 from Methanosarcina acetivorans (strain ATCC 35395 / DSM 2834 / JCM 12185 / C2A).